Reading from the N-terminus, the 579-residue chain is Proline--tRNA ligase (579 aa).

The protein belongs to the class-II aminoacyl-tRNA synthetase family. ProS type 1 subfamily. As to quaternary structure, homodimer.

The protein localises to the cytoplasm. The catalysed reaction is tRNA(Pro) + L-proline + ATP = L-prolyl-tRNA(Pro) + AMP + diphosphate. Its function is as follows. Catalyzes the attachment of proline to tRNA(Pro) in a two-step reaction: proline is first activated by ATP to form Pro-AMP and then transferred to the acceptor end of tRNA(Pro). As ProRS can inadvertently accommodate and process non-cognate amino acids such as alanine and cysteine, to avoid such errors it has two additional distinct editing activities against alanine. One activity is designated as 'pretransfer' editing and involves the tRNA(Pro)-independent hydrolysis of activated Ala-AMP. The other activity is designated 'posttransfer' editing and involves deacylation of mischarged Ala-tRNA(Pro). The misacylated Cys-tRNA(Pro) is not edited by ProRS. The protein is Proline--tRNA ligase of Chlamydia muridarum (strain MoPn / Nigg).